Reading from the N-terminus, the 1053-residue chain is Middle cell wall protein (1053 aa).

The N-terminal stretch at 1–23 is a signal peptide; that stretch reads MKKVVNSVLASALALTVAPMAFA. 3 SLH domains span residues 26 to 89, 90 to 153, and 154 to 203; these read EAAT…KLAQ, FSNT…KGVW, and PNSM…FGTD.

As to quaternary structure, the middle cell wall layer is composed of subunits of the middle cell wall protein. These proteins form a hexagonal array with a lattice constant of 14.5 nM in the middle cell wall layers.

The protein resides in the secreted. The protein localises to the cell wall. It localises to the S-layer. In terms of biological role, the middle wall protein binds to peptidoglycan and to the outer cell wall protein. The protein is Middle cell wall protein of Brevibacillus brevis (strain 47 / JCM 6285 / NBRC 100599).